The chain runs to 205 residues: dITP/XTP pyrophosphatase (205 aa).

Residue 8 to 13 (SGNKGK) participates in substrate binding. Aspartate 69 functions as the Proton acceptor in the catalytic mechanism. Aspartate 69 contacts Mg(2+). Residues serine 70, 153–156 (HGYD), lysine 176, and 181–182 (HR) each bind substrate.

The protein belongs to the HAM1 NTPase family. As to quaternary structure, homodimer. Mg(2+) is required as a cofactor.

It carries out the reaction XTP + H2O = XMP + diphosphate + H(+). The catalysed reaction is dITP + H2O = dIMP + diphosphate + H(+). It catalyses the reaction ITP + H2O = IMP + diphosphate + H(+). Functionally, pyrophosphatase that catalyzes the hydrolysis of nucleoside triphosphates to their monophosphate derivatives, with a high preference for the non-canonical purine nucleotides XTP (xanthosine triphosphate), dITP (deoxyinosine triphosphate) and ITP. Seems to function as a house-cleaning enzyme that removes non-canonical purine nucleotides from the nucleotide pool, thus preventing their incorporation into DNA/RNA and avoiding chromosomal lesions. This is dITP/XTP pyrophosphatase from Shewanella oneidensis (strain ATCC 700550 / JCM 31522 / CIP 106686 / LMG 19005 / NCIMB 14063 / MR-1).